Reading from the N-terminus, the 311-residue chain is Cytosolic Fe-S cluster assembly factor Nubp1 homolog (311 aa).

Cysteine 9, cysteine 23, cysteine 26, and cysteine 32 together coordinate [4Fe-4S] cluster. ATP is bound at residue 63–70 (GKGGVGKS). 2 residues coordinate [4Fe-4S] cluster: cysteine 240 and cysteine 243.

The protein belongs to the Mrp/NBP35 ATP-binding proteins family. NUBP1/NBP35 subfamily. In terms of assembly, heterotetramer of 2 Nubp1 and 2 Nubp2 chains. It depends on [4Fe-4S] cluster as a cofactor.

It is found in the cytoplasm. Component of the cytosolic iron-sulfur (Fe/S) protein assembly (CIA) machinery. Required for maturation of extramitochondrial Fe-S proteins. The Nubp1-Nubp2 heterotetramer forms a Fe-S scaffold complex, mediating the de novo assembly of an Fe-S cluster and its transfer to target apoproteins. In Drosophila pseudoobscura pseudoobscura (Fruit fly), this protein is Cytosolic Fe-S cluster assembly factor Nubp1 homolog.